The following is a 31-amino-acid chain: Cytochrome b6-f complex subunit 6 (31 aa).

A helical transmembrane segment spans residues 4–24 (ITSYFGFLLAALTLTLALFIG).

The protein belongs to the PetL family. In terms of assembly, the 4 large subunits of the cytochrome b6-f complex are cytochrome b6, subunit IV (17 kDa polypeptide, PetD), cytochrome f and the Rieske protein, while the 4 small subunits are PetG, PetL, PetM and PetN. The complex functions as a dimer.

Its subcellular location is the plastid. The protein localises to the chloroplast thylakoid membrane. In terms of biological role, component of the cytochrome b6-f complex, which mediates electron transfer between photosystem II (PSII) and photosystem I (PSI), cyclic electron flow around PSI, and state transitions. PetL is important for photoautotrophic growth as well as for electron transfer efficiency and stability of the cytochrome b6-f complex. In Oryza sativa subsp. japonica (Rice), this protein is Cytochrome b6-f complex subunit 6.